Reading from the N-terminus, the 450-residue chain is MTHVRFDYSKALTFFNEHELTYLRDFVKTAHHNIHEKTGAGSDFLGWVDLPEHYDKEEFARIKKSAEKIKSDSDVLLVVGIGGSYLGARAAIEALNHAFYNTLPKAKRGNPQVIFIGNNISSSYMRDVMDLLEDVDFSINVISKSGTTTEPAIAFRIFRKLLEEKYGKEEAKARIYATTDKERGALKTLSNEEGFESFVIPDDVGGRYSVLTAVGLLPIAVSGVNIDDMMKGALDASKDFATSELEDNPAYQYAVVRNVLYNKGKTIEMLINYEPALQYFAEWWKQLFGESEGKDEKGIYPSSANYSTDLHSLGQYVQEGRRDLFETVLNVEKPKHELTIEEADNDLDGLNYLAGKTVDFVNKKAFQGTMLAHTDGNVPNLIVNIPELNAYTFGYLVYFFEKACAMSGYLLGVNPFDQPGVEAYKVNMFALLGKPGFEEKKAELEKRLED.

At Thr38 the chain carries Phosphothreonine. Glu290 functions as the Proton donor in the catalytic mechanism. Residues His311 and Lys425 contribute to the active site.

The protein belongs to the GPI family.

The protein localises to the cytoplasm. The enzyme catalyses alpha-D-glucose 6-phosphate = beta-D-fructose 6-phosphate. It functions in the pathway carbohydrate biosynthesis; gluconeogenesis. Its pathway is carbohydrate degradation; glycolysis; D-glyceraldehyde 3-phosphate and glycerone phosphate from D-glucose: step 2/4. Functionally, catalyzes the reversible isomerization of glucose-6-phosphate to fructose-6-phosphate. The protein is Glucose-6-phosphate isomerase of Bacillus subtilis (strain 168).